Reading from the N-terminus, the 334-residue chain is UDP-N-acetylglucosamine 4,6-dehydratase (inverting) (334 aa).

Residues 13 to 16 (TGSF), 37 to 42 (SRDELK), 61 to 62 (DV), Ala-81, Lys-85, and 123 to 124 (LS) each bind NADP(+). Position 85 (Lys-85) interacts with substrate. Residue Lys-127 is part of the active site. Residues Tyr-135 and Lys-139 each contribute to the NADP(+) site. Asn-167 provides a ligand contact to substrate. 168-172 (VVGSR) serves as a coordination point for NADP(+). Residues Val-175, Thr-193, Arg-252, and Glu-255 each contribute to the substrate site.

The protein belongs to the polysaccharide synthase family. Homohexamer. The cofactor is NADP(+).

The enzyme catalyses UDP-N-acetyl-alpha-D-glucosamine = UDP-2-acetamido-2,6-dideoxy-beta-L-arabino-hex-4-ulose + H2O. In terms of biological role, catalyzes the first step in the biosynthesis of pseudaminic acid, a sialic-acid-like sugar that is used to modify flagellin. Has both C6 dehydratase and C5 epimerase activities that result in the production of both UDP-2-acetamido-2,6-dideoxy-beta-L-arabino-4-hexulose and UDP-2-acetamido-2,6-dideoxy-alpha-D-xylo-4-hexulose. The protein is UDP-N-acetylglucosamine 4,6-dehydratase (inverting) (pseB) of Campylobacter jejuni subsp. jejuni serotype O:2 (strain ATCC 700819 / NCTC 11168).